The sequence spans 433 residues: uncharacterized protein (433 aa).

This sequence belongs to the mimivirus R160 family.

Its subcellular location is the virion. This is an uncharacterized protein from Acanthamoeba polyphaga mimivirus (APMV).